The primary structure comprises 68 residues: Large ribosomal subunit protein eL24 (68 aa).

Zn(2+)-binding residues include Cys-7, Cys-10, Cys-33, and Cys-37. The segment at 7-37 adopts a C4-type zinc-finger fold; sequence CDFCGRIIEPGTGKMFVKNDGTILWFCSSKC.

The protein belongs to the eukaryotic ribosomal protein eL24 family. Part of the 50S ribosomal subunit. Forms a cluster with proteins L3 and L14. Requires Zn(2+) as cofactor.

Functionally, binds to the 23S rRNA. The protein is Large ribosomal subunit protein eL24 of Methanopyrus kandleri (strain AV19 / DSM 6324 / JCM 9639 / NBRC 100938).